Reading from the N-terminus, the 90-residue chain is DNA-binding protein HU-alpha (90 aa).

It belongs to the bacterial histone-like protein family. As to quaternary structure, heterodimer of an alpha and a beta chain.

Histone-like DNA-binding protein which is capable of wrapping DNA to stabilize it, and thus to prevent its denaturation under extreme environmental conditions. This is DNA-binding protein HU-alpha (hupA) from Vibrio cholerae serotype O1 (strain ATCC 39315 / El Tor Inaba N16961).